Here is an 880-residue protein sequence, read N- to C-terminus: Protein translocase subunit SecA (880 aa).

ATP contacts are provided by residues Gln-87, 105 to 109 (GEGKT), and Asp-501. Residues Cys-864, Cys-866, Cys-875, and His-876 each contribute to the Zn(2+) site.

It belongs to the SecA family. As to quaternary structure, monomer and homodimer. Part of the essential Sec protein translocation apparatus which comprises SecA, SecYEG and auxiliary proteins SecDF-YajC and YidC. Requires Zn(2+) as cofactor.

Its subcellular location is the cell inner membrane. It localises to the cytoplasm. The enzyme catalyses ATP + H2O + cellular proteinSide 1 = ADP + phosphate + cellular proteinSide 2.. In terms of biological role, part of the Sec protein translocase complex. Interacts with the SecYEG preprotein conducting channel. Has a central role in coupling the hydrolysis of ATP to the transfer of proteins into and across the cell membrane, serving both as a receptor for the preprotein-SecB complex and as an ATP-driven molecular motor driving the stepwise translocation of polypeptide chains across the membrane. The polypeptide is Protein translocase subunit SecA (Orientia tsutsugamushi (strain Boryong) (Rickettsia tsutsugamushi)).